The following is a 724-amino-acid chain: uncharacterized protein (724 aa).

Disordered stretches follow at residues 97–131 (RKSFTTPKGVSSEARRSFTRSASYSESNNSFYPSP), 187–252 (ETKI…FETE), 309–434 (FETE…TSKL), and 454–473 (RGVEGKTKKASKGQNSVAEK). The segment covering 115–128 (TRSASYSESNNSFY) has biased composition (polar residues). A coiled-coil region spans residues 187-217 (ETKIGIEEENEESEILAEEKEEEDNDFSVLE). The span at 193–212 (EEENEESEILAEEKEEEDND) shows a compositional bias: acidic residues. Basic and acidic residues-rich tracts occupy residues 223-252 (QEIKTEHHRESSGTEHETEAKDHSEGFETE) and 309-322 (FETEHENETEDHSE). Low complexity-rich tracts occupy residues 323-333 (TTTSETDSTES) and 347-366 (SPQTPSPTVSTFNTKSSLRS). Pro residues predominate over residues 367–388 (QPPPPPPSPEHKAPAPPPPPPM). A compositionally biased stretch (polar residues) spans 400 to 410 (FSKTHSTNGDN). Coiled-coil stretches lie at residues 495–522 (SYFQQIEEDVQKYAKSIEELKSSIHSFQ) and 649–678 (MELALKERREANEEAKNGEESKMKEERAKR).

This is an uncharacterized protein from Arabidopsis thaliana (Mouse-ear cress).